The following is a 258-amino-acid chain: Ribosomal RNA small subunit methyltransferase A (258 aa).

6 residues coordinate S-adenosyl-L-methionine: Asn-12, Leu-14, Gly-38, Glu-59, Asp-83, and Asn-100.

It belongs to the class I-like SAM-binding methyltransferase superfamily. rRNA adenine N(6)-methyltransferase family. RsmA subfamily.

It is found in the cytoplasm. The enzyme catalyses adenosine(1518)/adenosine(1519) in 16S rRNA + 4 S-adenosyl-L-methionine = N(6)-dimethyladenosine(1518)/N(6)-dimethyladenosine(1519) in 16S rRNA + 4 S-adenosyl-L-homocysteine + 4 H(+). Specifically dimethylates two adjacent adenosines (A1518 and A1519) in the loop of a conserved hairpin near the 3'-end of 16S rRNA in the 30S particle. May play a critical role in biogenesis of 30S subunits. The chain is Ribosomal RNA small subunit methyltransferase A from Metamycoplasma arthritidis (strain 158L3-1) (Mycoplasma arthritidis).